The chain runs to 270 residues: Tetracenomycin polyketide synthesis O-methyltransferase TcmP (270 aa).

It functions in the pathway antibiotic biosynthesis; tetracenomycin C biosynthesis. O-methyltransferase that catalyzes the methylation of the C-9 carboxy group of tetracenomycin E (TCM E) to yield TCM A2. Catalyzes as well the following side reactions: methylation of 8-O-methyl-TCM D3 to 9-carboxymethyl-8-O-methyl-TCM D3; and of TCM B3 to 9-carboxymethyl-TCM B3. The protein is Tetracenomycin polyketide synthesis O-methyltransferase TcmP (tcmP) of Streptomyces glaucescens.